The chain runs to 524 residues: Acetyl-CoA hydrolase (524 aa).

275-279 (GIGNI) provides a ligand contact to CoA. The 5-glutamyl coenzyme A thioester intermediate role is filled by Glu-300. CoA-binding residues include Asn-390 and Gly-394.

Belongs to the acetyl-CoA hydrolase/transferase family.

It localises to the cytoplasm. It catalyses the reaction acetyl-CoA + H2O = acetate + CoA + H(+). Functionally, presumably involved in regulating the intracellular acetyl-CoA pool for fatty acid and cholesterol synthesis and fatty acid oxidation. This chain is Acetyl-CoA hydrolase (ACH1), found in Candida albicans (strain SC5314 / ATCC MYA-2876) (Yeast).